We begin with the raw amino-acid sequence, 471 residues long: Ribulose bisphosphate carboxylase large chain (471 aa).

An N6,N6,N6-trimethyllysine modification is found at lysine 5. Positions 114 and 164 each coordinate substrate. The active-site Proton acceptor is the lysine 166. Lysine 168 serves as a coordination point for substrate. Mg(2+)-binding residues include lysine 192, aspartate 194, and glutamate 195. Position 192 is an N6-carboxylysine (lysine 192). Histidine 285 acts as the Proton acceptor in catalysis. Substrate contacts are provided by arginine 286, histidine 318, and serine 370.

The protein belongs to the RuBisCO large chain family. Type I subfamily. In terms of assembly, heterohexadecamer of 8 large chains and 8 small chains; disulfide-linked. The disulfide link is formed within the large subunit homodimers. Mg(2+) is required as a cofactor. Post-translationally, the disulfide bond which can form in the large chain dimeric partners within the hexadecamer appears to be associated with oxidative stress and protein turnover.

The protein resides in the plastid. It localises to the chloroplast. The enzyme catalyses 2 (2R)-3-phosphoglycerate + 2 H(+) = D-ribulose 1,5-bisphosphate + CO2 + H2O. The catalysed reaction is D-ribulose 1,5-bisphosphate + O2 = 2-phosphoglycolate + (2R)-3-phosphoglycerate + 2 H(+). Functionally, ruBisCO catalyzes two reactions: the carboxylation of D-ribulose 1,5-bisphosphate, the primary event in carbon dioxide fixation, as well as the oxidative fragmentation of the pentose substrate in the photorespiration process. Both reactions occur simultaneously and in competition at the same active site. This Strychnos nux-vomica (Poison nut) protein is Ribulose bisphosphate carboxylase large chain.